Consider the following 287-residue polypeptide: 4-hydroxybenzoate octaprenyltransferase (287 aa).

6 helical membrane passes run 23 to 40, 98 to 118, 141 to 161, 163 to 183, 213 to 233, and 235 to 255; these read IGSL…WLAG, ILFV…NKMT, LPQF…YAAV, ESLP…TVAY, IIIG…GNIT, and LGIP…YQQI.

The protein belongs to the UbiA prenyltransferase family. Requires Mg(2+) as cofactor.

Its subcellular location is the cell inner membrane. It catalyses the reaction all-trans-octaprenyl diphosphate + 4-hydroxybenzoate = 4-hydroxy-3-(all-trans-octaprenyl)benzoate + diphosphate. Its pathway is cofactor biosynthesis; ubiquinone biosynthesis. Its function is as follows. Catalyzes the prenylation of para-hydroxybenzoate (PHB) with an all-trans polyprenyl group. Mediates the second step in the final reaction sequence of ubiquinone-8 (UQ-8) biosynthesis, which is the condensation of the polyisoprenoid side chain with PHB, generating the first membrane-bound Q intermediate 3-octaprenyl-4-hydroxybenzoate. This Pectobacterium atrosepticum (strain SCRI 1043 / ATCC BAA-672) (Erwinia carotovora subsp. atroseptica) protein is 4-hydroxybenzoate octaprenyltransferase.